Reading from the N-terminus, the 431-residue chain is Enolase (431 aa).

Glutamine 167 provides a ligand contact to (2R)-2-phosphoglycerate. Catalysis depends on glutamate 209, which acts as the Proton donor. Positions 246, 289, and 316 each coordinate Mg(2+). Positions 341, 370, 371, and 392 each coordinate (2R)-2-phosphoglycerate. Catalysis depends on lysine 341, which acts as the Proton acceptor.

The protein belongs to the enolase family. As to quaternary structure, component of the RNA degradosome, a multiprotein complex involved in RNA processing and mRNA degradation. It depends on Mg(2+) as a cofactor.

It localises to the cytoplasm. The protein localises to the secreted. The protein resides in the cell surface. The enzyme catalyses (2R)-2-phosphoglycerate = phosphoenolpyruvate + H2O. It functions in the pathway carbohydrate degradation; glycolysis; pyruvate from D-glyceraldehyde 3-phosphate: step 4/5. Functionally, catalyzes the reversible conversion of 2-phosphoglycerate (2-PG) into phosphoenolpyruvate (PEP). It is essential for the degradation of carbohydrates via glycolysis. In Shewanella sp. (strain MR-4), this protein is Enolase.